The following is a 548-amino-acid chain: Chaperonin GroEL (548 aa).

ATP is bound by residues 30–33 (TLGP), lysine 51, 87–91 (DGTTT), glycine 415, 479–481 (NAA), and aspartate 495.

The protein belongs to the chaperonin (HSP60) family. As to quaternary structure, forms a cylinder of 14 subunits composed of two heptameric rings stacked back-to-back. Interacts with the co-chaperonin GroES. In terms of processing, UMPylated on a tyrosine residue by YdiU under ATP-limited conditions.

The protein localises to the cytoplasm. It carries out the reaction ATP + H2O + a folded polypeptide = ADP + phosphate + an unfolded polypeptide.. Its activity is regulated as follows. UMPylation of the chaperone by YdiU negatively regulates its activity, facilitating Salmonella survival under ATP-limited conditions. In terms of biological role, together with its co-chaperonin GroES, plays an essential role in assisting protein folding. The GroEL-GroES system forms a nano-cage that allows encapsulation of the non-native substrate proteins and provides a physical environment optimized to promote and accelerate protein folding. The chain is Chaperonin GroEL from Salmonella typhimurium (strain LT2 / SGSC1412 / ATCC 700720).